Here is a 208-residue protein sequence, read N- to C-terminus: Large ribosomal subunit protein uL4 (208 aa).

The interval 44-79 (QRQGTHKSKERSEISGSTRKLGRQKGGGGARRGDIN) is disordered.

It belongs to the universal ribosomal protein uL4 family. As to quaternary structure, part of the 50S ribosomal subunit.

In terms of biological role, one of the primary rRNA binding proteins, this protein initially binds near the 5'-end of the 23S rRNA. It is important during the early stages of 50S assembly. It makes multiple contacts with different domains of the 23S rRNA in the assembled 50S subunit and ribosome. Its function is as follows. Forms part of the polypeptide exit tunnel. The sequence is that of Large ribosomal subunit protein uL4 from Phocaeicola vulgatus (strain ATCC 8482 / DSM 1447 / JCM 5826 / CCUG 4940 / NBRC 14291 / NCTC 11154) (Bacteroides vulgatus).